Consider the following 505-residue polypeptide: MSVELWQQCVELLRDELPAQQFNTWIRPLQVEAEGDELRVYAPNRFVLDWVNEKYLGRLLELLGENGSGIAPALSLLIGSRRSSAPRAAPNAPVSAAVAASLAQTQAHKTAPAAAVEPVAVAAAEPVLVETSSRDSFDAMAEPAAAPPSGGRAEQRTVQVEGALKHTSYLNRTFTFDTFVEGKSNQLARAAAWQVADNPKHGYNPLFLYGGVGLGKTHLMHAVGNHLLKKNPNAKVVYLHSERFVADMVKALQLNAINEFKRFYRSVDALLIDDIQFFARKERSQEEFFHTFNALLEGGQQVILTSDRYPKEIEGLEERLKSRFGWGLTVAVEPPELETRVAILMKKADQAKVELPHDAAFFIAQRIRSNVRELEGALKRVIAHSHFMGRDITIELIRESLKDLLALQDKLVSVDNIQRTVAEYYKIKISDLLSKRRSRSVARPRQVAMALSKELTNHSLPEIGDMFGGRDHTTVLHACRKINELKESDADIREDYKNLLRTLTT.

Residues 1–90 (MSVELWQQCV…RRSSAPRAAP (90 aa)) form a domain I, interacts with DnaA modulators region. The segment at 91-168 (NAPVSAAVAA…QVEGALKHTS (78 aa)) is domain II. Positions 169–385 (YLNRTFTFDT…GALKRVIAHS (217 aa)) are domain III, AAA+ region. The ATP site is built by Gly213, Gly215, Lys216, and Thr217. The domain IV, binds dsDNA stretch occupies residues 386–505 (HFMGRDITIE…YKNLLRTLTT (120 aa)).

Belongs to the DnaA family. As to quaternary structure, oligomerizes as a right-handed, spiral filament on DNA at oriC.

Its subcellular location is the cytoplasm. Functionally, plays an essential role in the initiation and regulation of chromosomal replication. ATP-DnaA binds to the origin of replication (oriC) to initiate formation of the DNA replication initiation complex once per cell cycle. Binds the DnaA box (a 9 base pair repeat at the origin) and separates the double-stranded (ds)DNA. Forms a right-handed helical filament on oriC DNA; dsDNA binds to the exterior of the filament while single-stranded (ss)DNA is stabiized in the filament's interior. The ATP-DnaA-oriC complex binds and stabilizes one strand of the AT-rich DNA unwinding element (DUE), permitting loading of DNA polymerase. After initiation quickly degrades to an ADP-DnaA complex that is not apt for DNA replication. Binds acidic phospholipids. The polypeptide is Chromosomal replication initiator protein DnaA (Pseudomonas putida (strain ATCC 700007 / DSM 6899 / JCM 31910 / BCRC 17059 / LMG 24140 / F1)).